A 168-amino-acid chain; its full sequence is Photosystem I assembly protein Ycf3 (168 aa).

3 TPR repeats span residues 35 to 68 (AFTY…EIDP), 72 to 105 (SYIL…NPFL), and 120 to 153 (GEQA…TPGN).

This sequence belongs to the Ycf3 family.

It is found in the plastid. Its subcellular location is the chloroplast thylakoid membrane. Essential for the assembly of the photosystem I (PSI) complex. May act as a chaperone-like factor to guide the assembly of the PSI subunits. The chain is Photosystem I assembly protein Ycf3 from Gossypium barbadense (Sea Island cotton).